A 273-amino-acid polypeptide reads, in one-letter code: Ribosomal RNA small subunit methyltransferase A (273 aa).

S-adenosyl-L-methionine-binding residues include Asn-20, Leu-22, Gly-47, Glu-68, Asp-90, and Asn-110.

This sequence belongs to the class I-like SAM-binding methyltransferase superfamily. rRNA adenine N(6)-methyltransferase family. RsmA subfamily.

Its subcellular location is the cytoplasm. It catalyses the reaction adenosine(1518)/adenosine(1519) in 16S rRNA + 4 S-adenosyl-L-methionine = N(6)-dimethyladenosine(1518)/N(6)-dimethyladenosine(1519) in 16S rRNA + 4 S-adenosyl-L-homocysteine + 4 H(+). In terms of biological role, specifically dimethylates two adjacent adenosines (A1518 and A1519) in the loop of a conserved hairpin near the 3'-end of 16S rRNA in the 30S particle. May play a critical role in biogenesis of 30S subunits. This Chlorobium luteolum (strain DSM 273 / BCRC 81028 / 2530) (Pelodictyon luteolum) protein is Ribosomal RNA small subunit methyltransferase A.